The primary structure comprises 103 residues: MHVKKGDKVQVISGKDKGKQGVILAAFPKKNRVLVEGVNIVKKHVKPSQANPQGGIINQEAPIHVSNVMPLDPKTGLPTRVGYKVVDGKKVRYAKRSGEILDK.

Belongs to the universal ribosomal protein uL24 family. Part of the 50S ribosomal subunit.

One of two assembly initiator proteins, it binds directly to the 5'-end of the 23S rRNA, where it nucleates assembly of the 50S subunit. Its function is as follows. One of the proteins that surrounds the polypeptide exit tunnel on the outside of the subunit. In Anoxybacillus flavithermus (strain DSM 21510 / WK1), this protein is Large ribosomal subunit protein uL24.